Here is a 356-residue protein sequence, read N- to C-terminus: Tyrosine recombinase XerS (356 aa).

The 106-residue stretch at isoleucine 16–threonine 121 folds into the Core-binding (CB) domain. Positions alanine 169–aspartate 354 constitute a Tyr recombinase domain. Active-site residues include arginine 210, lysine 234, histidine 306, arginine 309, and histidine 332. Tyrosine 341 serves as the catalytic O-(3'-phospho-DNA)-tyrosine intermediate.

It belongs to the 'phage' integrase family. XerS subfamily.

It localises to the cytoplasm. With respect to regulation, ftsK is required for recombination. Site-specific tyrosine recombinase, which acts by catalyzing the cutting and rejoining of the recombining DNA molecules. Essential to convert dimers of the bacterial chromosome into monomers to permit their segregation at cell division. The chain is Tyrosine recombinase XerS from Streptococcus equi subsp. zooepidemicus (strain MGCS10565).